A 683-amino-acid polypeptide reads, in one-letter code: DNA ligase (683 aa).

NAD(+)-binding positions include 35 to 39, 81 to 82, and glutamate 112; these read DAEYD and SL. The active-site N6-AMP-lysine intermediate is lysine 114. The NAD(+) site is built by arginine 135, glutamate 170, lysine 277, and lysine 301. Cysteine 395, cysteine 398, cysteine 411, and cysteine 417 together coordinate Zn(2+). The BRCT domain maps to 601 to 683; it reads SSNSVLNNKV…YRMINSEVSE (83 aa).

Belongs to the NAD-dependent DNA ligase family. LigA subfamily. It depends on Mg(2+) as a cofactor. The cofactor is Mn(2+).

It catalyses the reaction NAD(+) + (deoxyribonucleotide)n-3'-hydroxyl + 5'-phospho-(deoxyribonucleotide)m = (deoxyribonucleotide)n+m + AMP + beta-nicotinamide D-nucleotide.. DNA ligase that catalyzes the formation of phosphodiester linkages between 5'-phosphoryl and 3'-hydroxyl groups in double-stranded DNA using NAD as a coenzyme and as the energy source for the reaction. It is essential for DNA replication and repair of damaged DNA. This is DNA ligase from Wolbachia sp. subsp. Brugia malayi (strain TRS).